Here is a 411-residue protein sequence, read N- to C-terminus: Putative competence-damage inducible protein (411 aa).

It belongs to the CinA family.

This is Putative competence-damage inducible protein from Caldicellulosiruptor bescii (strain ATCC BAA-1888 / DSM 6725 / KCTC 15123 / Z-1320) (Anaerocellum thermophilum).